Consider the following 538-residue polypeptide: Importin subunit alpha-4 (538 aa).

The IBB domain maps to 1–58 (MSLRPSTRAELRKKIYKTGVDADEARRRREDNLVEIRKNKREDSLLKKRREGMMLQQQ). 8 ARM repeats span residues 112–152 (SPPI…NVAS), 155–194 (SDHT…NVAG), 197–237 (PNCR…NFCR), 239–278 (KPPT…YLSD), 281–320 (NDKI…NIVT), 323–363 (DSQT…NITA), 366–405 (KLQI…NATS), and 409–448 (HEQI…NILK).

Belongs to the importin alpha family. In terms of assembly, forms a complex with importin subunit beta-1. Interacts with A.tumefaciens VirD2 and VirE2.

Its subcellular location is the nucleus envelope. In terms of biological role, binds to conventional NLS motifs and mediates nuclear protein import across the nuclear envelope. Acts as a cellular receptor for the nuclear import of the virD2 protein of Agrobacterium and is essential for Agrobacterium-mediated root transformation. This is Importin subunit alpha-4 from Arabidopsis thaliana (Mouse-ear cress).